A 97-amino-acid polypeptide reads, in one-letter code: Putative septation protein SpoVG (97 aa).

Belongs to the SpoVG family.

Functionally, could be involved in septation. The protein is Putative septation protein SpoVG of Borrelia garinii subsp. bavariensis (strain ATCC BAA-2496 / DSM 23469 / PBi) (Borreliella bavariensis).